The primary structure comprises 409 residues: Tyrosine--tRNA ligase (409 aa).

Tyr35 lines the L-tyrosine pocket. Positions 40–49 (CTAESLHVGS) match the 'HIGH' region motif. Residues Tyr172 and Gln176 each coordinate L-tyrosine. Positions 232-236 (KMGKT) match the 'KMSKS' region motif. Lys235 lines the ATP pocket. In terms of domain architecture, S4 RNA-binding spans 343 to 409 (ISILDLVILS…KKKHIKVELI (67 aa)).

Belongs to the class-I aminoacyl-tRNA synthetase family. TyrS type 1 subfamily. Homodimer.

Its subcellular location is the cytoplasm. The catalysed reaction is tRNA(Tyr) + L-tyrosine + ATP = L-tyrosyl-tRNA(Tyr) + AMP + diphosphate + H(+). Its function is as follows. Catalyzes the attachment of tyrosine to tRNA(Tyr) in a two-step reaction: tyrosine is first activated by ATP to form Tyr-AMP and then transferred to the acceptor end of tRNA(Tyr). In Pelagibacter ubique (strain HTCC1062), this protein is Tyrosine--tRNA ligase.